Consider the following 484-residue polypeptide: Protein nucleotidyltransferase YdiU (484 aa).

ATP is bound by residues glycine 81, glycine 83, arginine 84, lysine 103, aspartate 115, glycine 116, arginine 166, and arginine 173. Aspartate 244 functions as the Proton acceptor in the catalytic mechanism. Residues asparagine 245 and aspartate 254 each coordinate Mg(2+). An ATP-binding site is contributed by aspartate 254.

This sequence belongs to the SELO family. Mg(2+) is required as a cofactor. Requires Mn(2+) as cofactor.

It catalyses the reaction L-seryl-[protein] + ATP = 3-O-(5'-adenylyl)-L-seryl-[protein] + diphosphate. The enzyme catalyses L-threonyl-[protein] + ATP = 3-O-(5'-adenylyl)-L-threonyl-[protein] + diphosphate. The catalysed reaction is L-tyrosyl-[protein] + ATP = O-(5'-adenylyl)-L-tyrosyl-[protein] + diphosphate. It carries out the reaction L-histidyl-[protein] + UTP = N(tele)-(5'-uridylyl)-L-histidyl-[protein] + diphosphate. It catalyses the reaction L-seryl-[protein] + UTP = O-(5'-uridylyl)-L-seryl-[protein] + diphosphate. The enzyme catalyses L-tyrosyl-[protein] + UTP = O-(5'-uridylyl)-L-tyrosyl-[protein] + diphosphate. Nucleotidyltransferase involved in the post-translational modification of proteins. It can catalyze the addition of adenosine monophosphate (AMP) or uridine monophosphate (UMP) to a protein, resulting in modifications known as AMPylation and UMPylation. This is Protein nucleotidyltransferase YdiU from Shewanella baltica (strain OS155 / ATCC BAA-1091).